The sequence spans 386 residues: S-adenosylmethionine synthase (386 aa).

H16 contacts ATP. D18 contacts Mg(2+). Position 44 (E44) interacts with K(+). L-methionine-binding residues include E57 and Q100. A flexible loop region spans residues 100–110; the sequence is QSRDITQGVDR. ATP is bound by residues 165–167, D240, 246–247, A263, and K267; these read DAK and RK. D240 is an L-methionine binding site. K271 serves as a coordination point for L-methionine.

This sequence belongs to the AdoMet synthase family. Homotetramer; dimer of dimers. It depends on Mg(2+) as a cofactor. The cofactor is K(+).

It is found in the cytoplasm. The catalysed reaction is L-methionine + ATP + H2O = S-adenosyl-L-methionine + phosphate + diphosphate. It participates in amino-acid biosynthesis; S-adenosyl-L-methionine biosynthesis; S-adenosyl-L-methionine from L-methionine: step 1/1. Its function is as follows. Catalyzes the formation of S-adenosylmethionine (AdoMet) from methionine and ATP. The overall synthetic reaction is composed of two sequential steps, AdoMet formation and the subsequent tripolyphosphate hydrolysis which occurs prior to release of AdoMet from the enzyme. This Francisella tularensis subsp. tularensis (strain FSC 198) protein is S-adenosylmethionine synthase.